A 328-amino-acid polypeptide reads, in one-letter code: Peroxidase 59 (328 aa).

The N-terminal stretch at 1–28 (MKTQTKVMGGHVLLTVFTLCMLCSGVRA) is a signal peptide. Gln-29 is modified (pyrrolidone carboxylic acid). Cystine bridges form between Cys-39–Cys-116, Cys-72–Cys-77, Cys-122–Cys-323, and Cys-200–Cys-232. His-70 (proton acceptor) is an active-site residue. 5 residues coordinate Ca(2+): Asp-71, Val-74, Gly-76, Asp-78, and Ser-80. Pro-163 is a substrate binding site. Residue Asn-182 is glycosylated (N-linked (GlcNAc...) asparagine). His-193 serves as a coordination point for heme b. Thr-194 serves as a coordination point for Ca(2+). N-linked (GlcNAc...) asparagine glycans are attached at residues Asn-209 and Asn-239. Residues Asp-245, Thr-248, Thr-251, and Asp-253 each contribute to the Ca(2+) site. N-linked (GlcNAc...) asparagine glycosylation is found at Asn-281 and Asn-310.

Belongs to the peroxidase family. Classical plant (class III) peroxidase subfamily. Heme b is required as a cofactor. It depends on Ca(2+) as a cofactor. Slightly expressed in roots.

The protein resides in the secreted. It carries out the reaction 2 a phenolic donor + H2O2 = 2 a phenolic radical donor + 2 H2O. Functionally, removal of H(2)O(2), oxidation of toxic reductants, biosynthesis and degradation of lignin, suberization, auxin catabolism, response to environmental stresses such as wounding, pathogen attack and oxidative stress. These functions might be dependent on each isozyme/isoform in each plant tissue. This chain is Peroxidase 59 (PER59), found in Arabidopsis thaliana (Mouse-ear cress).